A 185-amino-acid chain; its full sequence is Ribosome-recycling factor (185 aa).

It belongs to the RRF family.

The protein resides in the cytoplasm. In terms of biological role, responsible for the release of ribosomes from messenger RNA at the termination of protein biosynthesis. May increase the efficiency of translation by recycling ribosomes from one round of translation to another. The sequence is that of Ribosome-recycling factor from Bacillus licheniformis (strain ATCC 14580 / DSM 13 / JCM 2505 / CCUG 7422 / NBRC 12200 / NCIMB 9375 / NCTC 10341 / NRRL NRS-1264 / Gibson 46).